We begin with the raw amino-acid sequence, 217 residues long: MTVENTALTLKKRFRGYFPVVVDVETAGFNAQTDALLEICAVTLSMDENGDLHPASTIHFHVEPFDGANLEKEALEFNGIRDPFSPLRGAVTEQEALKEIYKLIRREQKAADCSRAIMVAHNAAFDLSFVNAANERCKLKRVPFHPFATFDTATLSGLAYGQTVLAKACKTAGMEFDNREAHSALYDTEKTAELFCGIVNKWKALGGWPLIEDENEK.

One can recognise an Exonuclease domain in the interval 20 to 195 (VVVDVETAGF…YDTEKTAELF (176 aa)). 4 residues coordinate Mg(2+): aspartate 23, glutamate 25, histidine 182, and aspartate 187. Residue histidine 182 is the Proton donor/acceptor of the active site.

This sequence belongs to the RNase T family. As to quaternary structure, homodimer. Requires Mg(2+) as cofactor.

In terms of biological role, trims short 3' overhangs of a variety of RNA species, leaving a one or two nucleotide 3' overhang. Responsible for the end-turnover of tRNA: specifically removes the terminal AMP residue from uncharged tRNA (tRNA-C-C-A). Also appears to be involved in tRNA biosynthesis. The chain is Ribonuclease T from Vibrio vulnificus (strain CMCP6).